The following is a 205-amino-acid chain: Large ribosomal subunit protein uL4 (205 aa).

The segment at 44-79 (RAGTKAQKTRREVSGSGAKPWRQKGTGRARAGSSRS) is disordered.

This sequence belongs to the universal ribosomal protein uL4 family. As to quaternary structure, part of the 50S ribosomal subunit.

In terms of biological role, one of the primary rRNA binding proteins, this protein initially binds near the 5'-end of the 23S rRNA. It is important during the early stages of 50S assembly. It makes multiple contacts with different domains of the 23S rRNA in the assembled 50S subunit and ribosome. Forms part of the polypeptide exit tunnel. The chain is Large ribosomal subunit protein uL4 from Coxiella burnetii (strain Dugway 5J108-111).